Here is an 805-residue protein sequence, read N- to C-terminus: Leucine--tRNA ligase (805 aa).

Positions 40 to 51 (PYPSGQGLHVGH) match the 'HIGH' region motif. A 'KMSKS' region motif is present at residues 576–580 (KMSKS). Lys-579 contributes to the ATP binding site.

The protein belongs to the class-I aminoacyl-tRNA synthetase family.

The protein localises to the cytoplasm. It carries out the reaction tRNA(Leu) + L-leucine + ATP = L-leucyl-tRNA(Leu) + AMP + diphosphate. In Ligilactobacillus salivarius (strain UCC118) (Lactobacillus salivarius), this protein is Leucine--tRNA ligase.